The following is a 171-amino-acid chain: Small ribosomal subunit protein uS4 (171 aa).

In terms of domain architecture, S4 RNA-binding spans 104-168 (RRLQTIVYKK…SPFKERAEEA (65 aa)).

Belongs to the universal ribosomal protein uS4 family. In terms of assembly, part of the 30S ribosomal subunit. Contacts protein S5. The interaction surface between S4 and S5 is involved in control of translational fidelity.

One of the primary rRNA binding proteins, it binds directly to 16S rRNA where it nucleates assembly of the body of the 30S subunit. Functionally, with S5 and S12 plays an important role in translational accuracy. The chain is Small ribosomal subunit protein uS4 from Aeropyrum pernix (strain ATCC 700893 / DSM 11879 / JCM 9820 / NBRC 100138 / K1).